Consider the following 93-residue polypeptide: DNA-directed RNA polymerase subunit Rpo11 (93 aa).

This sequence belongs to the archaeal Rpo11/eukaryotic RPB11/RPC19 RNA polymerase subunit family. Part of the RNA polymerase complex.

The protein localises to the cytoplasm. The enzyme catalyses RNA(n) + a ribonucleoside 5'-triphosphate = RNA(n+1) + diphosphate. DNA-dependent RNA polymerase (RNAP) catalyzes the transcription of DNA into RNA using the four ribonucleoside triphosphates as substrates. In Sulfurisphaera tokodaii (strain DSM 16993 / JCM 10545 / NBRC 100140 / 7) (Sulfolobus tokodaii), this protein is DNA-directed RNA polymerase subunit Rpo11.